Consider the following 117-residue polypeptide: Large ribosomal subunit protein uL18 (117 aa).

The protein belongs to the universal ribosomal protein uL18 family. In terms of assembly, part of the 50S ribosomal subunit; part of the 5S rRNA/L5/L18/L25 subcomplex. Contacts the 5S and 23S rRNAs.

In terms of biological role, this is one of the proteins that bind and probably mediate the attachment of the 5S RNA into the large ribosomal subunit, where it forms part of the central protuberance. The protein is Large ribosomal subunit protein uL18 of Aliivibrio fischeri (strain MJ11) (Vibrio fischeri).